The following is a 3092-amino-acid chain: Inhibitory regulator protein IRA1 (3092 aa).

2 disordered regions span residues histidine 375–leucine 430 and leucine 450–asparagine 487. Over residues serine 379–lysine 400 the composition is skewed to low complexity. Polar residues predominate over residues glutamine 401–leucine 430. Positions threonine 455 to asparagine 487 are enriched in low complexity. Serine 497 and serine 915 each carry phosphoserine. Disordered stretches follow at residues serine 946–serine 988 and threonine 1003–lysine 1023. Positions glutamine 965–serine 988 are enriched in low complexity. Serine 1342 is subject to Phosphoserine. A Ras-GAP domain is found at asparagine 1725–leucine 1930. 2 positions are modified to phosphoserine; by PKA: serine 1753 and serine 3004.

It is found in the cytoplasm. Inhibitory regulator of the Ras-cyclic AMP pathway in S.cerevisiae. Stimulates the GTPase activity of Ras proteins. The sequence is that of Inhibitory regulator protein IRA1 (IRA1) from Saccharomyces cerevisiae (strain ATCC 204508 / S288c) (Baker's yeast).